The primary structure comprises 195 residues: Archaetidylinositol phosphate synthase (195 aa).

Helical transmembrane passes span 27-47 and 54-74; these read IALPADYITLTGFLVACAASA and LITGAALLAASGFIDVLDGAV. The Mg(2+) site is built by Asp68, Asp71, Asp89, and Asp93. Asp93 serves as the catalytic Proton acceptor. A run of 2 helical transmembrane segments spans residues 99–119 and 158–178; these read IIIIGITAGGFTGLLTGLLAL and LAGYLIHPWFMDAAIIVLAAL.

The protein belongs to the CDP-alcohol phosphatidyltransferase class-I family. Requires Mn(2+) as cofactor. The cofactor is Mg(2+).

It is found in the cell membrane. It catalyses the reaction CDP-2,3-bis-O-(phytanyl)-sn-glycerol + 1D-myo-inositol 3-phosphate = saturated 1-archaetidyl-1D-myo-inositol 3-phosphate + CMP + H(+). It functions in the pathway lipid metabolism; phospholipid metabolism. Catalyzes the formation of archaetidylinositol phosphate (AIP) from CDP-archaeol (CDP-ArOH or CDP-2,3-bis-(O-phytanyl)-sn-glycerol) and 1L-myo-inositol 1-phosphate (IP or 1D-myo-inositol 3-phosphate). AIP is a precursor of archaetidyl-myo-inositol (AI), an ether-type inositol phospholipid ubiquitously distributed in archaea membranes and essential for glycolipid biosynthesis in archaea. The chain is Archaetidylinositol phosphate synthase from Methanothermobacter thermautotrophicus (strain ATCC 29096 / DSM 1053 / JCM 10044 / NBRC 100330 / Delta H) (Methanobacterium thermoautotrophicum).